We begin with the raw amino-acid sequence, 695 residues long: Spermidine/spermine N(1)-acetyltransferase-like protein 1 (695 aa).

Polar residues-rich tracts occupy residues 1–39, 52–68, and 78–98; these read MNQS…QGSA, PSMS…NLPD, and DTWQ…SQLV. Disordered stretches follow at residues 1–274, 290–332, 344–375, and 387–493; these read MNQS…MNQM, DMKQ…PGMW, ASIS…NQSG, and RQSG…GLSQ. Over residues 105–122 the composition is skewed to low complexity; it reads SQPDPSQPGPSQSGPSQS. 7 stretches are compositionally biased toward polar residues: residues 123-179, 197-208, 231-266, 294-310, 355-375, 389-422, and 459-471; these read RMRQ…TGLS, GVQQPGISQQVP, PDTS…QPSP, PSMS…NLPD, APSQ…NQSG, SGGS…TGLS, and PGTS…QTGM. An N-acetyltransferase domain is found at 529–695; the sequence is FQIRHAEAGD…EELLDMAWEE (167 aa). Substrate is bound at residue 552–553; that stretch reads CE. Acetyl-CoA contacts are provided by residues 618 to 620 and 626 to 631; these read FYV and GLGIGA. Substrate-binding positions include 650-652 and glutamate 676; that span reads HFL.

This sequence belongs to the acetyltransferase family.

This is Spermidine/spermine N(1)-acetyltransferase-like protein 1 (SATL1) from Homo sapiens (Human).